The sequence spans 770 residues: NAD-dependent malic enzyme (770 aa).

Residues 1–440 form a malic enzyme region; the sequence is MNTGDKAKSQ…KLNRFVFRSG (440 aa). The active-site Proton acceptor is the lysine 107. A divalent metal cation is bound by residues glutamate 149 and aspartate 150. Positions 175 and 300 each coordinate NAD(+). The interval 441 to 770 is phosphate acetyltransferase; it reads FIMKPVFAAA…LAVVESSHPV (330 aa).

In the N-terminal section; belongs to the malic enzymes family. The protein in the C-terminal section; belongs to the phosphate acetyltransferase and butyryltransferase family. As to quaternary structure, homooctamer. Mg(2+) serves as cofactor. Mn(2+) is required as a cofactor.

It catalyses the reaction (S)-malate + NAD(+) = pyruvate + CO2 + NADH. With respect to regulation, subject to substrate inhibition and shows allosteric regulation by acetyl-CoA. In terms of biological role, required for symbiotic nitrogen fixation. Plays a key role in the conversion of malate to acetyl-CoA for efficient tricarboxylic acid cycle function in nitrogen-fixating bacteria. This chain is NAD-dependent malic enzyme (dme), found in Rhizobium meliloti (strain 1021) (Ensifer meliloti).